The sequence spans 202 residues: uncharacterized protein (202 aa).

This is an uncharacterized protein from Saccharomyces cerevisiae (strain ATCC 204508 / S288c) (Baker's yeast).